We begin with the raw amino-acid sequence, 67 residues long: Cold shock-like protein CspE (67 aa).

The CSD domain maps to 5-64 (GKVKWFNSEKGFGFIEVEGGNDVFVHFSAITGDGFKSLDEGQEVSFEVEDGNRGPQAKNV).

In terms of assembly, homodimer.

Its subcellular location is the cytoplasm. Can bind to ATTGG and CCAAT motifs (Y-box motifs) of single-stranded oligonucleotides. The sequence is that of Cold shock-like protein CspE (cspE) from Bacillus anthracis.